The following is a 291-amino-acid chain: 4-diphosphocytidyl-2-C-methyl-D-erythritol kinase (291 aa).

Residue Lys-10 is part of the active site. 94–104 lines the ATP pocket; the sequence is PVSAGLAGGSS. Asp-136 is a catalytic residue.

The protein belongs to the GHMP kinase family. IspE subfamily.

The catalysed reaction is 4-CDP-2-C-methyl-D-erythritol + ATP = 4-CDP-2-C-methyl-D-erythritol 2-phosphate + ADP + H(+). The protein operates within isoprenoid biosynthesis; isopentenyl diphosphate biosynthesis via DXP pathway; isopentenyl diphosphate from 1-deoxy-D-xylulose 5-phosphate: step 3/6. Functionally, catalyzes the phosphorylation of the position 2 hydroxy group of 4-diphosphocytidyl-2C-methyl-D-erythritol. In Listeria innocua serovar 6a (strain ATCC BAA-680 / CLIP 11262), this protein is 4-diphosphocytidyl-2-C-methyl-D-erythritol kinase.